A 450-amino-acid chain; its full sequence is MPSILLLGSGFVAHPTLEYLSRRKENNITVACRTLSKAEAFINGIPNSKAIALDVNDEAALEKAVSEHDLTISLIPYTYHATVMKAAIKHGKHVCTTSYVNPKMAELEEAAIKAGSICMNEIGVDPGIDHLYAIKTIEEVHKAGGKIKSFLSYCGGLPAPEDSNNPLGYKFSWSSRGVLLALRNSAKFYENGKLVEIDGKDLMETAKPYFIYPGYAFVCYPNRDSTVYQERYQIPEAETIIRGTLRYQGFPEFIHCLVDMGFLDETAQEYLSPEAPALPWKEVTARVIKAESSSEADLIKKISSIHKFKDEDDKKRILNGLKWLGMFSSKPVTPRGNPLDTLCATLEELMQYEEGERDMLILQHKFEVETKEGKRQTRTCTLLDYGVPNGYTSMAKLVGVPCGVATQQILDGVINTPGVLAPNDMKLCGPLIDTLAKEGIRLEEEIIDEE.

Residues 9 to 12 (SGFV), 32 to 34 (CRT), 54 to 55 (DV), Ile75, 97 to 98 (TS), 124 to 126 (VDP), and Ser174 each bind NADP(+). Residues 98–99 (SY) and Asp125 contribute to the L-saccharopine site. L-saccharopine contacts are provided by residues Arg223 and 244–246 (TLR).

Belongs to the saccharopine dehydrogenase family. In terms of assembly, homodimer.

It localises to the cytoplasm. The enzyme catalyses L-saccharopine + NADP(+) + H2O = (S)-2-amino-6-oxohexanoate + L-glutamate + NADPH + H(+). It participates in amino-acid biosynthesis; L-lysine biosynthesis via AAA pathway; L-lysine from L-alpha-aminoadipate (fungal route): step 2/3. The sequence is that of Saccharopine dehydrogenase [NADP(+), L-glutamate-forming] from Schizosaccharomyces pombe (strain 972 / ATCC 24843) (Fission yeast).